Here is a 190-residue protein sequence, read N- to C-terminus: Glutathione peroxidase 2 (190 aa).

Selenocysteine 40 is an active-site residue. Residue selenocysteine 40 is a non-standard amino acid, selenocysteine.

It belongs to the glutathione peroxidase family. Homotetramer.

Its subcellular location is the cytoplasm. It is found in the cytosol. The catalysed reaction is 2 glutathione + H2O2 = glutathione disulfide + 2 H2O. It catalyses the reaction a hydroperoxy polyunsaturated fatty acid + 2 glutathione = a hydroxy polyunsaturated fatty acid + glutathione disulfide + H2O. It carries out the reaction tert-butyl hydroperoxide + 2 glutathione = tert-butanol + glutathione disulfide + H2O. The enzyme catalyses cumene hydroperoxide + 2 glutathione = 2-phenylpropan-2-ol + glutathione disulfide + H2O. The catalysed reaction is (13S)-hydroperoxy-(9Z,11E)-octadecadienoate + 2 glutathione = (13S)-hydroxy-(9Z,11E)-octadecadienoate + glutathione disulfide + H2O. It catalyses the reaction (5S)-hydroperoxy-(6E,8Z,11Z,14Z)-eicosatetraenoate + 2 glutathione = (5S)-hydroxy-(6E,8Z,11Z,14Z)-eicosatetraenoate + glutathione disulfide + H2O. It carries out the reaction (12R)-hydroperoxy-(5Z,8Z,10E,14Z)-eicosatetraenoate + 2 glutathione = (12R)-hydroxy-(5Z,8Z,10E,14Z)-eicosatetraenoate + glutathione disulfide + H2O. The enzyme catalyses (15S)-hydroperoxy-(5Z,8Z,11Z,13E)-eicosatetraenoate + 2 glutathione = (15S)-hydroxy-(5Z,8Z,11Z,13E)-eicosatetraenoate + glutathione disulfide + H2O. In terms of biological role, catalyzes the reduction of hydroperoxides in a glutathione-dependent manner thus regulating cellular redox homeostasis. Can reduce small soluble hydroperoxides such as H2O2, cumene hydroperoxide and tert-butyl hydroperoxide, as well as several fatty acid-derived hydroperoxides. Cannot reduce phosphatidycholine hydroperoxide. This chain is Glutathione peroxidase 2 (GPX2), found in Sapajus apella (Brown-capped capuchin).